The chain runs to 290 residues: Endoplasmic reticulum-Golgi intermediate compartment protein 1 (290 aa).

At 1-27 (MSFDVRRFDIYRKVPKDLTQPTYTGAF) the chain is on the cytoplasmic side. Residues 28 to 48 (ISICCCVFMLFLFLSELTGFI) traverse the membrane as a helical segment. The Lumenal portion of the chain corresponds to 49–254 (ATEIVNELYV…RRRPFYRFIT (206 aa)). N-linked (GlcNAc...) asparagine glycosylation is present at asparagine 74. The helical transmembrane segment at 255-275 (TICAIIGGTFTVAGIIDSCIF) threads the bilayer. Residues 276-290 (TASEAWKKIQIGKMS) lie on the Cytoplasmic side of the membrane.

This sequence belongs to the ERGIC family.

Its subcellular location is the endoplasmic reticulum membrane. It localises to the endoplasmic reticulum-Golgi intermediate compartment membrane. It is found in the golgi apparatus membrane. Its function is as follows. Possible role in transport between endoplasmic reticulum and Golgi. The sequence is that of Endoplasmic reticulum-Golgi intermediate compartment protein 1 (ergic1) from Danio rerio (Zebrafish).